Reading from the N-terminus, the 377-residue chain is Chaperone protein DnaJ (377 aa).

One can recognise a J domain in the interval 6–70 (DYYKILGIDK…EKKAIYDKYG (65 aa)). Residues 143–225 (GRVISQKLDK…CKGAKKIKES (83 aa)) form a CR-type zinc finger. Residues Cys-156, Cys-159, Cys-173, Cys-176, Cys-199, Cys-202, Cys-213, and Cys-216 each coordinate Zn(2+). CXXCXGXG motif repeat units lie at residues 156–163 (CESCNGTG), 173–180 (CSTCNGRG), 199–206 (CSTCNGLG), and 213–220 (CPSCKGAK).

Belongs to the DnaJ family. In terms of assembly, homodimer. The cofactor is Zn(2+).

It localises to the cytoplasm. Participates actively in the response to hyperosmotic and heat shock by preventing the aggregation of stress-denatured proteins and by disaggregating proteins, also in an autonomous, DnaK-independent fashion. Unfolded proteins bind initially to DnaJ; upon interaction with the DnaJ-bound protein, DnaK hydrolyzes its bound ATP, resulting in the formation of a stable complex. GrpE releases ADP from DnaK; ATP binding to DnaK triggers the release of the substrate protein, thus completing the reaction cycle. Several rounds of ATP-dependent interactions between DnaJ, DnaK and GrpE are required for fully efficient folding. Also involved, together with DnaK and GrpE, in the DNA replication of plasmids through activation of initiation proteins. The protein is Chaperone protein DnaJ of Mycoplasmopsis pulmonis (strain UAB CTIP) (Mycoplasma pulmonis).